The following is a 1290-amino-acid chain: MTRKTRYLHQITTLILGGLLIVPAAAPPVSADIAATHVYHNHMPNFWAYYDLNTYNSTPVGSPIRYTYDGEVIQLKQNPPAGYPYYLPNGSPMPHDDLVSYYSHHAKTGAYLTWPWSVANTLHSSHPQAQMHVTMSGSVVNNVNSIIQQGNVSGYNNPAWGTPWKNAVTQLKTAGGDNRLDLIHFSGHHSMGPLVGNDYLLKDMIYHGATMAQPYFLGSSYKSSKGFFPTELGFSERIIPVLNKLGIQWSVIGNNHFSRTLKDYPLLDSPGTDTMISPPNRSDLQNVSTAGAWVNEPMFNEQQVVYNKYPFASTAHWVRYVDPATGAESRVVGVPVAQAQSWEEGYLGQVKADALKPYENLVAQKQIFVVAHDGDNSSGRAGSEETWRNAGNVTYADSGVTGMGIDEYLRSNTPAAADVVHVQDGSWIDTRDSSSDPAWYHWHLPFGIWKGQFAAFNQVNGTAYAPKKNLAGVEEGMTVSFEKGYHYLERNFALLQASLNYAKTAEQIWLEEHPNYWKPANPLDREVTYEGNQLNPWMLSYPVKGNPANDYAGGANPAELAWYFLLPAMDSGFGYYDENVDDSVKPALSFNQSLYFSKPYVSQKLAKDKTGPSVWWPQRYPYNPGSANVSKAEGWTLQHYNNAFAIYTYAFDTSGISEIKVKVRAHRDKTADAADNTFKVYDPAGLAAAGIANIDPAKVGAWTEYPMNVRDLSADINGVDWQPSSMTIMQKVPATDIGNLYFSYISDYRDQLLDYFIEAKDAKGNVTQSDIQQVYVGAGKYKLANGKYTESMQGTIEGTHPFITDVPAVPDTEAPAVPANLQATVMNASSVGLSWNAATDNIRVTGYEIYRNGVRIGTTPSTSYTDSGLSASTAYEYRVKAYDASGNLSGFSAAATATTPAGNHVTVYYKQGYSTPYIHYRPAGGTWTTAPGVAIPAAEVAGYNKITINIGAATQLEACFNNGSGTWDSNGGSNYLFGTGTWTYTPTGKIQAGAPVAPSATPTVAPTATPTPKPSVTPTVTPITTPTVAPTLSPTPTVAPTVKPSATPIATPTVTPTVSPTATPTVVPTIAPTATPTTSPSATPVPTATPAGNSATIYYKNTAFSNSYIHYKLDGATAWTTSPGVQMQASTFSGYKAITIPLGSATGLTAAFNNGSGIWDNNGGSNYHFGTGSSSLTGGNLITGEPQADSVTFRVSVPGSTPANAPVYLTGSFNSWNAADPAYLLTRGSDGIYSITLNLPAGSAVTYKLTRGSWATVETASSGADITNRTLTPAGGAQTVTLTVQRWKDQ.

The N-terminal stretch at 1–31 (MTRKTRYLHQITTLILGGLLIVPAAAPPVSA) is a signal peptide. The active-site Nucleophile is the E231. D373 (proton donor) is an active-site residue. The Fibronectin type-III domain maps to 817 to 902 (VPANLQATVM…AAATATTPAG (86 aa)). Positions 902–978 (GNHVTVYYKQ…SNGGSNYLFG (77 aa)) are CBM25. Low complexity-rich tracts occupy residues 994–1008 (APVA…APTA) and 1016–1031 (VTPT…VAPT). The tract at residues 994 to 1037 (APVAPSATPTVAPTATPTPKPSVTPTVTPITTPTVAPTLSPTPT) is disordered. A CBM25 region spans residues 1092 to 1171 (GNSATIYYKN…NGGSNYHFGT (80 aa)). Residues 1183-1289 (TGEPQADSVT…VTLTVQRWKD (107 aa)) form the CBM20 domain.

The protein belongs to the glycosyl hydrolase 119 (GH119) family.

The protein resides in the secreted. It carries out the reaction Endohydrolysis of (1-&gt;4)-alpha-D-glucosidic linkages in polysaccharides containing three or more (1-&gt;4)-alpha-linked D-glucose units.. Acts on maltooligosaccharides that have a degree of polymerization (DP) of 4 or more, amylose, and soluble or raw starch to produce glucose and maltooligosaccharides up to DP5 by a hydrolysis reaction. Also acts on maltooligosyl trehaloses that have DP5 or more to produce trehalose as the major hydrolysis product. The chain is Alpha-amylase from Niallia circulans (Bacillus circulans).